The sequence spans 361 residues: MSSNQSYVFYRQELNKTLWEVPDRYQNLTPVGSGAYGSVCSSFDTRTALRIAVKKLSRPFQSIIHAKRTYRELRLLKHMKHENVIGLLDVFSPAKSFEEFNDVYLVTHLMGADLNNIVKCQKLTDDHVQFLIYQILRGLKYIHSAGIIHRDLKPSNLAVNEDCELKILDFGLARHTDEEMTGYVATRWYRAPEIMLNWMHYNQTVDIWSVGCIMAELLTGRTLFPGTDHIDQLKLILRLVGTPEPELLQKISSEAARNYIQSLPYMPKMNFEDVFLGANPQAVDLLEKMLVLDTDKRITAAEALAHSYFAQYHDPDDEPIAEPYDQSFESRELDIEEWKRLTYEEVTCFVPPPLDSEEMES.

The Protein kinase domain occupies 25-309 (YQNLTPVGSG…AAEALAHSYF (285 aa)). Residues 31 to 39 (VGSGAYGSV) and Lys-54 contribute to the ATP site. Asp-151 functions as the Proton acceptor in the catalytic mechanism. Position 181 is a phosphothreonine (Thr-181). The TXY signature appears at 181-183 (TGY). At Tyr-183 the chain carries Phosphotyrosine.

The protein belongs to the protein kinase superfamily. CMGC Ser/Thr protein kinase family. MAP kinase subfamily. It depends on Mg(2+) as a cofactor. Dually phosphorylated on Thr-181 and Tyr-183, which activates the enzyme.

It carries out the reaction L-seryl-[protein] + ATP = O-phospho-L-seryl-[protein] + ADP + H(+). The catalysed reaction is L-threonyl-[protein] + ATP = O-phospho-L-threonyl-[protein] + ADP + H(+). With respect to regulation, activated by tyrosine and threonine phosphorylation. Its function is as follows. Serine/threonine kinase which acts as an essential component of the MAP kinase signal transduction pathway. mapk14a is one of the four p38 MAPKs which play an important role in the cascades of cellular responses evoked by extracellular stimuli such as pro-inflammatory cytokines or physical stress leading to direct activation of transcription factors. Accordingly, p38 MAPKs phosphorylate a broad range of proteins and it has been estimated that they may have approximately 200 to 300 substrates each. Some of the targets are downstream kinases which are activated through phosphorylation and further phosphorylate additional targets. MPK2 is activated by upstream MAPKK/MAPKKK and stimulates MAPKAP kinase 2 to phosphorylate small heat shock proteins. Does not phosphorylate myelin basic protein or MAPKAP kinase 1. This is Mitogen-activated protein kinase 14 (mapk14) from Xenopus laevis (African clawed frog).